The sequence spans 425 residues: Adenylosuccinate synthetase (425 aa).

GTP is bound by residues 12–18 and 40–42; these read GDEGKGK and GHT. D13 serves as the catalytic Proton acceptor. Residues D13 and G40 each contribute to the Mg(2+) site. IMP is bound by residues 13–16, 38–41, T126, R140, Q221, T236, and R300; these read DEGK and NAGH. H41 serves as the catalytic Proton donor. 296 to 302 is a binding site for substrate; sequence ATTGRPR. GTP-binding positions include R302, 328-330, and 410-412; these read KLD and STG.

This sequence belongs to the adenylosuccinate synthetase family. In terms of assembly, homodimer. It depends on Mg(2+) as a cofactor.

It is found in the cytoplasm. The enzyme catalyses IMP + L-aspartate + GTP = N(6)-(1,2-dicarboxyethyl)-AMP + GDP + phosphate + 2 H(+). It functions in the pathway purine metabolism; AMP biosynthesis via de novo pathway; AMP from IMP: step 1/2. In terms of biological role, plays an important role in the de novo pathway of purine nucleotide biosynthesis. Catalyzes the first committed step in the biosynthesis of AMP from IMP. In Thermodesulfovibrio yellowstonii (strain ATCC 51303 / DSM 11347 / YP87), this protein is Adenylosuccinate synthetase.